The following is an 87-amino-acid chain: MANHKSAEKRARQTIKRTERNRFYRTRLKNITKAVREAAANNDKEAAANALKIANKSIHAMVSRGFLKKQTASRRVSRLALLVNKIA.

A disordered region spans residues 1–20; sequence MANHKSAEKRARQTIKRTER.

It belongs to the bacterial ribosomal protein bS20 family.

In terms of biological role, binds directly to 16S ribosomal RNA. The sequence is that of Small ribosomal subunit protein bS20 from Campylobacter lari (strain RM2100 / D67 / ATCC BAA-1060).